The following is a 179-amino-acid chain: ATP synthase subunit delta (179 aa).

The protein belongs to the ATPase delta chain family. F-type ATPases have 2 components, F(1) - the catalytic core - and F(0) - the membrane proton channel. F(1) has five subunits: alpha(3), beta(3), gamma(1), delta(1), epsilon(1). F(0) has three main subunits: a(1), b(2) and c(10-14). The alpha and beta chains form an alternating ring which encloses part of the gamma chain. F(1) is attached to F(0) by a central stalk formed by the gamma and epsilon chains, while a peripheral stalk is formed by the delta and b chains.

It localises to the cell membrane. F(1)F(0) ATP synthase produces ATP from ADP in the presence of a proton or sodium gradient. F-type ATPases consist of two structural domains, F(1) containing the extramembraneous catalytic core and F(0) containing the membrane proton channel, linked together by a central stalk and a peripheral stalk. During catalysis, ATP synthesis in the catalytic domain of F(1) is coupled via a rotary mechanism of the central stalk subunits to proton translocation. Its function is as follows. This protein is part of the stalk that links CF(0) to CF(1). It either transmits conformational changes from CF(0) to CF(1) or is implicated in proton conduction. The chain is ATP synthase subunit delta from Staphylococcus haemolyticus (strain JCSC1435).